The following is a 99-amino-acid chain: UPF0125 protein BU253 (99 aa).

Belongs to the UPF0125 (RnfH) family.

The polypeptide is UPF0125 protein BU253 (Buchnera aphidicola subsp. Acyrthosiphon pisum (strain APS) (Acyrthosiphon pisum symbiotic bacterium)).